The chain runs to 145 residues: UPF0179 protein Msm_0285 (145 aa).

Belongs to the UPF0179 family.

The protein is UPF0179 protein Msm_0285 of Methanobrevibacter smithii (strain ATCC 35061 / DSM 861 / OCM 144 / PS).